A 402-amino-acid chain; its full sequence is Deoxyguanosinetriphosphate triphosphohydrolase-like protein (402 aa).

The region spanning 73 to 217 (RLTHTIEVAQ…AAIADDIAYN (145 aa)) is the HD domain.

Belongs to the dGTPase family. Type 2 subfamily.

The polypeptide is Deoxyguanosinetriphosphate triphosphohydrolase-like protein (Brucella anthropi (strain ATCC 49188 / DSM 6882 / CCUG 24695 / JCM 21032 / LMG 3331 / NBRC 15819 / NCTC 12168 / Alc 37) (Ochrobactrum anthropi)).